The sequence spans 368 residues: 1-deoxy-D-xylulose 5-phosphate reductoisomerase (368 aa).

Residues Thr-7, Gly-8, Ser-9, Ile-10, Gly-31, Lys-32, Asn-33, and Asn-113 each coordinate NADPH. Residue Lys-114 coordinates 1-deoxy-D-xylulose 5-phosphate. Glu-115 contacts NADPH. Position 133 (Asp-133) interacts with Mn(2+). 1-deoxy-D-xylulose 5-phosphate contacts are provided by Ser-134, Glu-135, Ser-158, and His-181. A Mn(2+)-binding site is contributed by Glu-135. An NADPH-binding site is contributed by Gly-187. The 1-deoxy-D-xylulose 5-phosphate site is built by Ser-194, Asn-199, Lys-200, and Glu-203. Glu-203 provides a ligand contact to Mn(2+).

It belongs to the DXR family. The cofactor is Mg(2+). Mn(2+) serves as cofactor.

The enzyme catalyses 2-C-methyl-D-erythritol 4-phosphate + NADP(+) = 1-deoxy-D-xylulose 5-phosphate + NADPH + H(+). The protein operates within isoprenoid biosynthesis; isopentenyl diphosphate biosynthesis via DXP pathway; isopentenyl diphosphate from 1-deoxy-D-xylulose 5-phosphate: step 1/6. In terms of biological role, catalyzes the NADPH-dependent rearrangement and reduction of 1-deoxy-D-xylulose-5-phosphate (DXP) to 2-C-methyl-D-erythritol 4-phosphate (MEP). This Helicobacter pylori (strain ATCC 700392 / 26695) (Campylobacter pylori) protein is 1-deoxy-D-xylulose 5-phosphate reductoisomerase.